The primary structure comprises 82 residues: NAD(P)H-quinone oxidoreductase subunit O, organellar chromatophore (82 aa).

The protein belongs to the complex I NdhO subunit family. NDH-1 can be composed of about 15 different subunits; different subcomplexes with different compositions have been identified which probably have different functions.

The protein localises to the plastid. It localises to the organellar chromatophore thylakoid membrane. The catalysed reaction is a plastoquinone + NADH + (n+1) H(+)(in) = a plastoquinol + NAD(+) + n H(+)(out). It carries out the reaction a plastoquinone + NADPH + (n+1) H(+)(in) = a plastoquinol + NADP(+) + n H(+)(out). Functionally, NDH-1 shuttles electrons from an unknown electron donor, via FMN and iron-sulfur (Fe-S) centers, to quinones in the respiratory and/or the photosynthetic chain. The immediate electron acceptor for the enzyme in this species is believed to be plastoquinone. Couples the redox reaction to proton translocation, and thus conserves the redox energy in a proton gradient. Cyanobacterial NDH-1 also plays a role in inorganic carbon-concentration. This chain is NAD(P)H-quinone oxidoreductase subunit O, organellar chromatophore, found in Paulinella chromatophora.